We begin with the raw amino-acid sequence, 416 residues long: Signal recognition particle receptor FtsY (416 aa).

The segment covering 1–10 (MFSFFRRKKK) has biased composition (basic residues). The segment at 1 to 24 (MFSFFRRKKKQETPALEEAQVQET) is disordered. Residues 224–231 (GINGAGKT), 304–308 (DTAGR), and 368–371 (TKLD) contribute to the GTP site.

The protein belongs to the GTP-binding SRP family. FtsY subfamily. Part of the signal recognition particle protein translocation system, which is composed of SRP and FtsY. SRP is a ribonucleoprotein composed of Ffh and a 4.5S RNA molecule. Mg(2+) serves as cofactor.

Its subcellular location is the cell membrane. The protein localises to the cytoplasm. The enzyme catalyses GTP + H2O = GDP + phosphate + H(+). Its function is as follows. Involved in targeting and insertion of nascent membrane proteins into the cytoplasmic membrane. Acts as a receptor for the complex formed by the signal recognition particle (SRP) and the ribosome-nascent chain (RNC). Interaction with SRP-RNC leads to the transfer of the RNC complex to the Sec translocase for insertion into the membrane, the hydrolysis of GTP by both Ffh and FtsY, and the dissociation of the SRP-FtsY complex into the individual components. This Neisseria gonorrhoeae protein is Signal recognition particle receptor FtsY.